A 77-amino-acid chain; its full sequence is Putative regulatory protein tsl2331 (77 aa).

Belongs to the RemA family.

This is Putative regulatory protein tsl2331 from Thermosynechococcus vestitus (strain NIES-2133 / IAM M-273 / BP-1).